Reading from the N-terminus, the 682-residue chain is Kinesin-like protein KIF2A (682 aa).

The segment at 1 to 192 (MVTSLNEDSE…LDYRPLTTSD (192 aa)) is globular. The tract at residues 39-129 (LAPDEEIDPG…GKKDFGLASR (91 aa)) is disordered. Residues 99 to 115 (IEQSASRQQNGSVSDIS) are compositionally biased toward polar residues. A Kinesin motor domain is found at 198–528 (RICVCVRKRP…LRYANRVKEL (331 aa)). 288 to 295 (GQTGSGKT) serves as a coordination point for ATP. The stretch at 638–673 (QLEAILEKKIDILTELRDKVKSFRAALQEEEHASKQ) forms a coiled coil.

The protein belongs to the TRAFAC class myosin-kinesin ATPase superfamily. Kinesin family. MCAK/KIF2 subfamily. In terms of assembly, interacts with aurka and plk1. Post-translationally, phosphorylation by plk1 promotes location at spindle microtubules and spindle poles, and enhances its microtubule depolymerization activity. Phosphorylation by AURKA interferes with location at spindle microtubules and spindle poles, and inhibits its microtubule depolymerization activity.

The protein resides in the cytoplasm. It localises to the cytoskeleton. Its subcellular location is the microtubule organizing center. It is found in the centrosome. The protein localises to the spindle pole. The protein resides in the spindle. Functionally, plus end-directed microtubule-dependent motor. May regulate microtubule dynamics during axonal growth. Required for normal progression through mitosis. Required for normal congress of chromosomes at the metaphase plate. Required for normal spindle dynamics during mitosis. Promotes spindle turnover. Implicated in formation of bipolar mitotic spindles Has microtubule depolymerization activity. In Xenopus laevis (African clawed frog), this protein is Kinesin-like protein KIF2A (kif2a).